An 81-amino-acid chain; its full sequence is Defensin-like protein 45 (81 aa).

An N-terminal signal peptide occupies residues 1 to 27; that stretch reads MAITKTSATFVLLIILAASLSNFNVLA. 4 disulfides stabilise this stretch: C40/C79, C44/C67, C53/C77, and C57/C78.

It belongs to the DEFL family.

It localises to the secreted. In Arabidopsis thaliana (Mouse-ear cress), this protein is Defensin-like protein 45.